The primary structure comprises 358 residues: Serine/threonine-protein phosphatase 2A activator (358 aa).

The tract at residues 1 to 20 is disordered; the sequence is MAEGERQPPPDSSEEAPPAT. Position 2 is an N-acetylalanine (Ala-2). Positions 183, 188, and 189 each coordinate ATP. The Mg(2+) site is built by Gly-243 and Asp-249. ATP-binding residues include Pro-339, Gln-342, and His-343.

This sequence belongs to the PTPA-type PPIase family. Associates with PP2A heterodimeric core enzyme PP2A(D), composed of a 36 kDa catalytic subunit (subunit C) and a 65 kDa constant regulatory subunit (PR65 or subunit A). Interacts with the catalytic subunit PPP2CA (via C-terminus). Interacts with PPP2CB. In terms of tissue distribution, widely expressed.

It localises to the cytoplasm. Its subcellular location is the nucleus. It catalyses the reaction [protein]-peptidylproline (omega=180) = [protein]-peptidylproline (omega=0). Functionally, PPIases accelerate the folding of proteins. It catalyzes the cis-trans isomerization of proline imidic peptide bonds in oligopeptides. Acts as a regulatory subunit for serine/threonine-protein phosphatase 2A (PP2A). Modulates PP2A activity or substrate specificity, probably by inducing a conformational change in the catalytic subunit, a proposed direct target of the PPIase. Can reactivate inactive phosphatase PP2A-phosphatase methylesterase complexes (PP2A(i)) in presence of ATP and Mg(2+). Reversibly stimulates the variable phosphotyrosyl phosphatase activity of PP2A core heterodimer PP2A(D) in presence of ATP and Mg(2+) (in vitro). The phosphotyrosyl phosphatase activity is dependent of an ATPase activity of the PP2A(D):PPP2R4 complex. Is involved in apoptosis; the function appears to be independent from PP2A. The sequence is that of Serine/threonine-protein phosphatase 2A activator from Homo sapiens (Human).